Reading from the N-terminus, the 55-residue chain is Serine protease inhibitor Kazal-type 1 (55 aa).

One can recognise a Kazal-like domain in the interval 2–55 (QGRDANCNYEFPGCPRNLEPVCGTDGNTYNNECLLCMENKKRDVPIRIQKDGPC). 3 cysteine pairs are disulfide-bonded: Cys-8–Cys-37, Cys-15–Cys-34, and Cys-23–Cys-55.

Its subcellular location is the secreted. Functionally, serine protease inhibitor which exhibits anti-trypsin activity. In the pancreas, protects against trypsin-catalyzed premature activation of zymogens. In the male reproductive tract, binds to sperm heads where it modulates sperm capacitance by inhibiting calcium uptake and nitrogen oxide (NO) production. The chain is Serine protease inhibitor Kazal-type 1 (SPINK1) from Monodelphis domestica (Gray short-tailed opossum).